We begin with the raw amino-acid sequence, 513 residues long: Xylose import ATP-binding protein XylG (513 aa).

2 consecutive ABC transporter domains span residues 5 to 242 (LEMK…VGRE) and 259 to 505 (LRIE…LRSE). Residue 37–44 (GENGSGKS) coordinates ATP.

This sequence belongs to the ABC transporter superfamily. Xylose importer (TC 3.A.1.2.4) family. The complex is composed of two ATP-binding proteins (XylG), two transmembrane proteins (XylH) and a solute-binding protein (XylF).

The protein resides in the cell inner membrane. The enzyme catalyses D-xylose(out) + ATP + H2O = D-xylose(in) + ADP + phosphate + H(+). Functionally, part of the ABC transporter complex XylFGH involved in xylose import. Responsible for energy coupling to the transport system. The XylFGH system can also transport ribose in absence of xylose. The sequence is that of Xylose import ATP-binding protein XylG from Escherichia coli (strain K12).